The chain runs to 197 residues: Protein GrpE (197 aa).

Positions 1-40 (MSSKEQKTPEGQAPEEIIMDRHEEIEAVEPEASAEQVDPR) are disordered.

It belongs to the GrpE family. Homodimer.

Its subcellular location is the cytoplasm. Participates actively in the response to hyperosmotic and heat shock by preventing the aggregation of stress-denatured proteins, in association with DnaK and GrpE. It is the nucleotide exchange factor for DnaK and may function as a thermosensor. Unfolded proteins bind initially to DnaJ; upon interaction with the DnaJ-bound protein, DnaK hydrolyzes its bound ATP, resulting in the formation of a stable complex. GrpE releases ADP from DnaK; ATP binding to DnaK triggers the release of the substrate protein, thus completing the reaction cycle. Several rounds of ATP-dependent interactions between DnaJ, DnaK and GrpE are required for fully efficient folding. This is Protein GrpE from Shigella flexneri serotype 5b (strain 8401).